The following is a 417-amino-acid chain: Frizzy aggregation protein FrzCD (417 aa).

Basic and acidic residues predominate over residues 1–11 (MSLDTPNEKPA). The disordered stretch occupies residues 1 to 34 (MSLDTPNEKPAGKARARKAPASKAGATNAASTSS). The segment covering 21 to 34 (ASKAGATNAASTSS) has biased composition (low complexity). In terms of domain architecture, Methyl-accepting transducer spans 144-380 (AALRLSSSAN…QVVASMAEIE (237 aa)).

Belongs to the methyl-accepting chemotaxis (MCP) protein family. Methylated. Saturated fatty acids capric acid and lauric acid stimulate methylation. Short-chain alcohols, such as isoamyl alcohol, and some other solvents cause demethylation.

Its subcellular location is the cytoplasm. Its function is as follows. Methyl-accepting taxis protein necessary for the proper aggregation of cells to form fruiting bodies. Frz genes define a system of signal transduction analogous to the enterobacterial chemotaxis systems. The protein is Frizzy aggregation protein FrzCD (frzCD) of Myxococcus xanthus.